The chain runs to 61 residues: Putative antitoxin RelB2 (61 aa).

Its function is as follows. Antitoxin component of a type II toxin-antitoxin (TA) system. Its cognate toxin is RelE2 (Potential). This chain is Putative antitoxin RelB2 (relB2), found in Methanocaldococcus jannaschii (strain ATCC 43067 / DSM 2661 / JAL-1 / JCM 10045 / NBRC 100440) (Methanococcus jannaschii).